The chain runs to 330 residues: tRNA-modifying protein YgfZ (330 aa).

Folate-binding residues include W28 and W190.

It belongs to the tRNA-modifying YgfZ family.

The protein localises to the cytoplasm. Its function is as follows. Folate-binding protein involved in regulating the level of ATP-DnaA and in the modification of some tRNAs. It is probably a key factor in regulatory networks that act via tRNA modification, such as initiation of chromosomal replication. In Yersinia pseudotuberculosis serotype O:1b (strain IP 31758), this protein is tRNA-modifying protein YgfZ.